Consider the following 169-residue polypeptide: MLRSEKPVAVEDIVNIYKESPSVIITHYHGLTVSQVSSLRDSLKSKEAGFKVVKNTLAKIAANQTGLDSIANLFAGPTAIVYSKEPVEMAKLVVNFAKANDNLKIIGGIVDNHVLDEHSIKELSKLPSLNELRGKIVGLLQAPATKVVGVLQAPSSSMARVIQAHASKN.

This sequence belongs to the universal ribosomal protein uL10 family. In terms of assembly, part of the ribosomal stalk of the 50S ribosomal subunit. The N-terminus interacts with L11 and the large rRNA to form the base of the stalk. The C-terminus forms an elongated spine to which L12 dimers bind in a sequential fashion forming a multimeric L10(L12)X complex.

Forms part of the ribosomal stalk, playing a central role in the interaction of the ribosome with GTP-bound translation factors. In Rickettsia felis (strain ATCC VR-1525 / URRWXCal2) (Rickettsia azadi), this protein is Large ribosomal subunit protein uL10.